We begin with the raw amino-acid sequence, 142 residues long: Transcriptional regulator MraZ (142 aa).

SpoVT-AbrB domains lie at 5-51 and 77-120; these read ASAL…PRPE and AMDV…DAQT.

This sequence belongs to the MraZ family. Forms oligomers.

It localises to the cytoplasm. The protein localises to the nucleoid. The chain is Transcriptional regulator MraZ from Burkholderia mallei (strain NCTC 10247).